The chain runs to 469 residues: Lactonohydrolase oryH (469 aa).

Residues 1 to 20 (MYLSLRLVSLALCIAPLASA) form the signal peptide.

This sequence belongs to the SMP-30/CGR1 family.

The protein operates within secondary metabolite biosynthesis. Lactonohydrolase; part of the gene cluster that mediates the biosynthesis of oryzines, natural products with an unusual maleidride backbone. The two subunits of the fungal fatty acid synthase oryfasA and oryfasB probably form octenoic acid. This fatty acid is most likely activated by the acyl-CoA ligase oryP to give octenyl-CoA before the citrate synthase-like protein oryE catalyzes condensation with oxaloacetate to form tricarboxylic acid. The next steps of the pathways are conjectural, but a favorite possible route has been proposed, beginning with decarboxylation and concomitant dehydration by the decarboxylase oryM, followed by tautomerization, which may lead to the production of a diene intermediate. Reduction of this diene intermediate could give the known metabolite piliformic acid. On the pathway to oryzine B and oryzine A, however, hydroxylation of the diene by the alpha-ketoglutarate-dependent dioxygenase oryG and lactonisation by the lactonohydrolases oryH or oryL could give oryzine B directly. Finally, enoyl reduction by the dehydrogenase oryD would then convert oryzine B into oryzine A. The chain is Lactonohydrolase oryH from Aspergillus oryzae (strain ATCC 42149 / RIB 40) (Yellow koji mold).